A 400-amino-acid polypeptide reads, in one-letter code: CCA-adding enzyme (400 aa).

The ATP site is built by Gly-28 and Arg-31. Residues Gly-28 and Arg-31 each contribute to the CTP site. Asp-41 and Asp-43 together coordinate Mg(2+). ATP-binding residues include Arg-112, Asp-155, Arg-158, Arg-161, and Arg-164. 5 residues coordinate CTP: Arg-112, Asp-155, Arg-158, Arg-161, and Arg-164.

This sequence belongs to the tRNA nucleotidyltransferase/poly(A) polymerase family. Bacterial CCA-adding enzyme type 3 subfamily. As to quaternary structure, homodimer. Mg(2+) serves as cofactor.

The catalysed reaction is a tRNA precursor + 2 CTP + ATP = a tRNA with a 3' CCA end + 3 diphosphate. It catalyses the reaction a tRNA with a 3' CCA end + 2 CTP + ATP = a tRNA with a 3' CCACCA end + 3 diphosphate. In terms of biological role, catalyzes the addition and repair of the essential 3'-terminal CCA sequence in tRNAs without using a nucleic acid template. Adds these three nucleotides in the order of C, C, and A to the tRNA nucleotide-73, using CTP and ATP as substrates and producing inorganic pyrophosphate. tRNA 3'-terminal CCA addition is required both for tRNA processing and repair. Also involved in tRNA surveillance by mediating tandem CCA addition to generate a CCACCA at the 3' terminus of unstable tRNAs. While stable tRNAs receive only 3'-terminal CCA, unstable tRNAs are marked with CCACCA and rapidly degraded. This is CCA-adding enzyme from Oceanobacillus iheyensis (strain DSM 14371 / CIP 107618 / JCM 11309 / KCTC 3954 / HTE831).